Reading from the N-terminus, the 500-residue chain is Maturase K (500 aa).

The protein belongs to the intron maturase 2 family. MatK subfamily.

The protein localises to the plastid. It localises to the chloroplast. In terms of biological role, usually encoded in the trnK tRNA gene intron. Probably assists in splicing its own and other chloroplast group II introns. This is Maturase K from Adiantum capillus-veneris (Maidenhair fern).